Consider the following 246-residue polypeptide: Aquaporin AqpM (246 aa).

The Cytoplasmic portion of the chain corresponds to 1 to 11; the sequence is MVSLTKRCIAE. A helical membrane pass occupies residues 12-32; that stretch reads FIGTFFLVFFGAGAAAITLMI. The Extracellular segment spans residues 33–45; sequence ASGGTAPNPFNIG. A helical transmembrane segment spans residues 46–66; that stretch reads IGLLGGLGDWVAIGLAFGFAI. Residues 67–69 are Cytoplasmic-facing; that stretch reads AAS. A helical membrane pass occupies residues 70–90; it reads IYALGNISGCHINPAVTIGLW. The NPA 1 motif lies at 82–84; that stretch reads NPA. The Extracellular portion of the chain corresponds to 91 to 103; it reads SVKKFPGRDVVPY. Residues 104–124 traverse the membrane as a helical segment; that stretch reads IIAQLLGAAFASFIFLQCAGI. At 125–145 the chain is on the cytoplasmic side; it reads TAATIGGLGATAPFPGIGYWQ. A helical transmembrane segment spans residues 146–166; sequence AMLAETVGTFLLMITIMGIAV. The Extracellular segment spans residues 167–172; sequence DERAPK. A helical transmembrane segment spans residues 173 to 193; it reads GFAGIIIGLTVAGIITTIGNI. Residues 194 to 217 are Cytoplasmic-facing; sequence TGSSLNPARTFGPYLNDMVFAGTN. The NPA 2 motif lies at 199 to 201; the sequence is NPA. Residues 218-238 form a helical membrane-spanning segment; that stretch reads LWNYFPIYVIGPVVGAVLAAL. Residues 239-246 lie on the Extracellular side of the membrane; sequence TYQYLTSE.

This sequence belongs to the MIP/aquaporin (TC 1.A.8) family. In terms of assembly, homotetramer.

It is found in the cell membrane. Functionally, channel that permits osmotically driven movement of water in both directions. It mediates rapid entry or exit of water in response to abrupt changes in osmolarity. Also exhibits a transient but reproducible increase in the initial glycerol flux. The chain is Aquaporin AqpM (aqpM) from Methanothermobacter thermautotrophicus (strain ATCC 29096 / DSM 1053 / JCM 10044 / NBRC 100330 / Delta H) (Methanobacterium thermoautotrophicum).